Consider the following 445-residue polypeptide: Probable D-serine dehydratase (445 aa).

The residue at position 111 (Lys111) is an N6-(pyridoxal phosphate)lysine.

Belongs to the serine/threonine dehydratase family. DsdA subfamily. Requires pyridoxal 5'-phosphate as cofactor.

The catalysed reaction is D-serine = pyruvate + NH4(+). This chain is Probable D-serine dehydratase, found in Burkholderia pseudomallei (strain 1106a).